The primary structure comprises 447 residues: Glyceraldehyde-3-phosphate dehydrogenase GAPB, chloroplastic (447 aa).

A chloroplast-targeting transit peptide spans 1 to 80 (MATHAALAVS…STPVRGETVA (80 aa)). Residues 91 to 92 (RI), Asp-115, and Arg-160 each bind NADP(+). D-glyceraldehyde 3-phosphate-binding positions include 234–236 (SCT), Thr-265, Arg-280, 293–294 (TG), and Arg-316. The Nucleophile role is filled by Cys-235. Asn-399 provides a ligand contact to NADP(+).

Belongs to the glyceraldehyde-3-phosphate dehydrogenase family. Tetramer of either four A chains (GAPDH 2) or two A and two B chains (GAPDH 1). As to expression, expressed in leaves and stems.

It localises to the plastid. Its subcellular location is the chloroplast membrane. It is found in the chloroplast stroma. The catalysed reaction is D-glyceraldehyde 3-phosphate + phosphate + NADP(+) = (2R)-3-phospho-glyceroyl phosphate + NADPH + H(+). It functions in the pathway carbohydrate biosynthesis; Calvin cycle. In terms of biological role, involved in the photosynthetic reductive pentose phosphate pathway (Calvin-Benson cycle). Catalyzes the reduction of 1,3-diphosphoglycerate by NADPH. The chain is Glyceraldehyde-3-phosphate dehydrogenase GAPB, chloroplastic (GAPB) from Arabidopsis thaliana (Mouse-ear cress).